Here is a 242-residue protein sequence, read N- to C-terminus: Phosphoribosylaminoimidazole-succinocarboxamide synthase (242 aa).

Belongs to the SAICAR synthetase family.

It carries out the reaction 5-amino-1-(5-phospho-D-ribosyl)imidazole-4-carboxylate + L-aspartate + ATP = (2S)-2-[5-amino-1-(5-phospho-beta-D-ribosyl)imidazole-4-carboxamido]succinate + ADP + phosphate + 2 H(+). The protein operates within purine metabolism; IMP biosynthesis via de novo pathway; 5-amino-1-(5-phospho-D-ribosyl)imidazole-4-carboxamide from 5-amino-1-(5-phospho-D-ribosyl)imidazole-4-carboxylate: step 1/2. The polypeptide is Phosphoribosylaminoimidazole-succinocarboxamide synthase (Cyanothece sp. (strain PCC 7425 / ATCC 29141)).